The sequence spans 174 residues: RNA pyrophosphohydrolase (174 aa).

Residues 6-149 (GYRPNVGIIL…KRDVYERALS (144 aa)) form the Nudix hydrolase domain. The Nudix box signature appears at 38-59 (GGIKPGESPEAAMYRELLEEVG).

Belongs to the Nudix hydrolase family. RppH subfamily. The cofactor is a divalent metal cation.

Accelerates the degradation of transcripts by removing pyrophosphate from the 5'-end of triphosphorylated RNA, leading to a more labile monophosphorylated state that can stimulate subsequent ribonuclease cleavage. In Chromobacterium violaceum (strain ATCC 12472 / DSM 30191 / JCM 1249 / CCUG 213 / NBRC 12614 / NCIMB 9131 / NCTC 9757 / MK), this protein is RNA pyrophosphohydrolase.